Reading from the N-terminus, the 479-residue chain is UDP-N-acetylmuramoyl-L-alanyl-D-glutamate--2,6-diaminopimelate ligase (479 aa).

A UDP-N-acetyl-alpha-D-muramoyl-L-alanyl-D-glutamate-binding site is contributed by Ser-21. Gly-98–Ser-104 is an ATP binding site. UDP-N-acetyl-alpha-D-muramoyl-L-alanyl-D-glutamate-binding positions include Thr-144–Thr-145, Ser-171, Gln-177, and Arg-179. An N6-carboxylysine modification is found at Lys-211. Meso-2,6-diaminopimelate contacts are provided by residues Arg-372, Asp-396–Arg-399, Gly-446, and Glu-450. The Meso-diaminopimelate recognition motif signature appears at Asp-396–Arg-399.

This sequence belongs to the MurCDEF family. MurE subfamily. The cofactor is Mg(2+). Carboxylation is probably crucial for Mg(2+) binding and, consequently, for the gamma-phosphate positioning of ATP.

Its subcellular location is the cytoplasm. The enzyme catalyses UDP-N-acetyl-alpha-D-muramoyl-L-alanyl-D-glutamate + meso-2,6-diaminopimelate + ATP = UDP-N-acetyl-alpha-D-muramoyl-L-alanyl-gamma-D-glutamyl-meso-2,6-diaminopimelate + ADP + phosphate + H(+). The protein operates within cell wall biogenesis; peptidoglycan biosynthesis. Catalyzes the addition of meso-diaminopimelic acid to the nucleotide precursor UDP-N-acetylmuramoyl-L-alanyl-D-glutamate (UMAG) in the biosynthesis of bacterial cell-wall peptidoglycan. This is UDP-N-acetylmuramoyl-L-alanyl-D-glutamate--2,6-diaminopimelate ligase from Rickettsia rickettsii.